We begin with the raw amino-acid sequence, 442 residues long: Methylenetetrahydrofolate--tRNA-(uracil-5-)-methyltransferase TrmFO 1 (442 aa).

9–14 (GAGLAG) provides a ligand contact to FAD.

Belongs to the MnmG family. TrmFO subfamily. Requires FAD as cofactor.

It localises to the cytoplasm. It catalyses the reaction uridine(54) in tRNA + (6R)-5,10-methylene-5,6,7,8-tetrahydrofolate + NADH + H(+) = 5-methyluridine(54) in tRNA + (6S)-5,6,7,8-tetrahydrofolate + NAD(+). The catalysed reaction is uridine(54) in tRNA + (6R)-5,10-methylene-5,6,7,8-tetrahydrofolate + NADPH + H(+) = 5-methyluridine(54) in tRNA + (6S)-5,6,7,8-tetrahydrofolate + NADP(+). Catalyzes the folate-dependent formation of 5-methyl-uridine at position 54 (M-5-U54) in all tRNAs. This is Methylenetetrahydrofolate--tRNA-(uracil-5-)-methyltransferase TrmFO 1 from Mesoplasma florum (strain ATCC 33453 / NBRC 100688 / NCTC 11704 / L1) (Acholeplasma florum).